The primary structure comprises 485 residues: Pentatricopeptide repeat-containing protein At1g62720 (485 aa).

PPR repeat units lie at residues 68–102, 103–137, 138–172, 173–207, 208–242, 243–277, 278–312, 313–347, 348–378, 380–414, 415–449, and 450–484; these read SIVD…GIGH, DLYS…GYEP, DVVT…GFRP, DVVI…GVRA, DAVT…DIVP, NVIT…CVDP, DVFT…GCLP, DVVT…GLVG, DTIT…MDSR, NIRT…EIEL, DITT…GLKP, and DVVS…GLLP.

Belongs to the PPR family. P subfamily.

This Arabidopsis thaliana (Mouse-ear cress) protein is Pentatricopeptide repeat-containing protein At1g62720.